The following is a 591-amino-acid chain: Trihelix transcription factor PTL (591 aa).

Residues 1 to 32 (MDQDQHPQYGIPELRQLMKGGGRTTTTTPSTS) form a disordered region. In terms of domain architecture, Myb-like 1 spans 118–177 (GRWPRQETLTLLEIRSRLDHKFKEANQKGPLWDEVSRIMSEEHGYQRSGKKCREKFENLY). Residues 380-410 (CSSPEERTNGNNEIRNNSETQNENGSDQTMT) are disordered. A compositionally biased stretch (polar residues) spans 388 to 410 (NGNNEIRNNSETQNENGSDQTMT). The Myb-like 2 domain maps to 422 to 479 (WGEQEILKLMEIRTSMDSTFQEILGGCSDEFLWEEIAAKLIQLGFDQRSALLCKEKWE). Residues 491–551 (QINKKRKDNS…SNANANANVT (61 aa)) are disordered. Over residues 515–534 (IYNNRESGYNDNDPHQINEQ) the composition is skewed to polar residues. The segment covering 535-551 (GNVGSSTSNANANANVT) has biased composition (low complexity).

In terms of assembly, interacts with KIN10. In terms of tissue distribution, confined to flowers, at low levels. Also present in 7-days-old seedlings. Barely detectable in other tissues such as young seedlings, roots, stems, leaves and siliques. Expressed in flower primordia, more precisely between newly arisen sepal primordia and also at the basal margins of developing sepals.

It localises to the nucleus. In terms of biological role, transcription factor that prevents growth. Regulates perianth architecture in flower, mostly in the second whorl, probably by suppressing growth between initiating sepals, ensuring that they remain separate, and by modulating organ shapes. Required for the establishment of auxin flux. In Arabidopsis thaliana (Mouse-ear cress), this protein is Trihelix transcription factor PTL (PTL).